The following is a 691-amino-acid chain: Dipeptidyl peptidase 3 (691 aa).

Zn(2+) is bound at residue His431. Glu432 is a catalytic residue. Zn(2+) contacts are provided by His436 and Glu492.

It belongs to the peptidase M49 family. Zn(2+) serves as cofactor.

It is found in the cytoplasm. It carries out the reaction Release of an N-terminal dipeptide from a peptide comprising four or more residues, with broad specificity. Also acts on dipeptidyl 2-naphthylamides.. The polypeptide is Dipeptidyl peptidase 3 (dpp3-1) (Dictyostelium discoideum (Social amoeba)).